Here is a 1358-residue protein sequence, read N- to C-terminus: Protein STU1 (1358 aa).

Disordered stretches follow at residues 915-950 (FVADSPSDSDNDDTKKNGSDVVDHEEIRDHEESHGF) and 970-990 (QPETVDENVDPMEVDSPDESN). The span at 926-949 (DDTKKNGSDVVDHEEIRDHEESHG) shows a compositional bias: basic and acidic residues. Positions 973–990 (TVDENVDPMEVDSPDESN) are enriched in acidic residues.

The protein belongs to the CLASP family. As to quaternary structure, interacts with microtubules.

Its subcellular location is the cytoplasm. The protein localises to the cytoskeleton. The protein resides in the nucleus. It is found in the spindle. Microtubule binding protein that promotes the stabilization of dynamic microtubules. Required for mitotic spindle formation. In Kluyveromyces lactis (strain ATCC 8585 / CBS 2359 / DSM 70799 / NBRC 1267 / NRRL Y-1140 / WM37) (Yeast), this protein is Protein STU1 (STU1).